We begin with the raw amino-acid sequence, 303 residues long: MNPQELKSILSSGLLSFPVTDFNAQGDFHRAGYIKRLEWLAPYGASALFAAGGTGEFFSLAASEYSEIIKTAVDTCATSVPILAGVGGPTRQAIEYAQEAERLGAKGLLLLPHYLTEASQDGVAAHVEAVCKAVKIGVVVYNRNVCRLTPTLLEQLAERCPNLIGYKDGLGDIELMVSIRRRLGDRFSYLGGLPTAEVYAAAYKALGVPVYSSAVFNFVPKLAMDFYHAIARDDHEAVGKYIDDFFLPYLEIRNRKAGYAVSIVKAGAKIAGYDAGPVRAPLTDLTPDECDMLAALMDKQGKQ.

The protein belongs to the DapA family.

It catalyses the reaction 5-dehydro-4-deoxy-D-glucarate + H(+) = 2,5-dioxopentanoate + CO2 + H2O. It functions in the pathway carbohydrate acid metabolism; D-glucarate degradation; 2,5-dioxopentanoate from D-glucarate: step 2/2. The polypeptide is Probable 5-dehydro-4-deoxyglucarate dehydratase (Pseudomonas savastanoi pv. phaseolicola (strain 1448A / Race 6) (Pseudomonas syringae pv. phaseolicola (strain 1448A / Race 6))).